We begin with the raw amino-acid sequence, 289 residues long: Acetyl-coenzyme A carboxylase carboxyl transferase subunit beta (289 aa).

The region spanning 34-289 (MWVKCNKCGE…KLINMHQNSF (256 aa)) is the CoA carboxyltransferase N-terminal domain. Cys38, Cys41, Cys57, and Cys60 together coordinate Zn(2+). The segment at 38-60 (CNKCGEILYQNDLEKNYMVCNLC) adopts a C4-type zinc-finger fold.

This sequence belongs to the AccD/PCCB family. As to quaternary structure, acetyl-CoA carboxylase is a heterohexamer composed of biotin carboxyl carrier protein (AccB), biotin carboxylase (AccC) and two subunits each of ACCase subunit alpha (AccA) and ACCase subunit beta (AccD). Zn(2+) is required as a cofactor.

It localises to the cytoplasm. It carries out the reaction N(6)-carboxybiotinyl-L-lysyl-[protein] + acetyl-CoA = N(6)-biotinyl-L-lysyl-[protein] + malonyl-CoA. It participates in lipid metabolism; malonyl-CoA biosynthesis; malonyl-CoA from acetyl-CoA: step 1/1. Component of the acetyl coenzyme A carboxylase (ACC) complex. Biotin carboxylase (BC) catalyzes the carboxylation of biotin on its carrier protein (BCCP) and then the CO(2) group is transferred by the transcarboxylase to acetyl-CoA to form malonyl-CoA. The polypeptide is Acetyl-coenzyme A carboxylase carboxyl transferase subunit beta (Clostridium botulinum (strain Kyoto / Type A2)).